Consider the following 132-residue polypeptide: Small ribosomal subunit protein uS8 (132 aa).

The protein belongs to the universal ribosomal protein uS8 family. As to quaternary structure, part of the 30S ribosomal subunit. Contacts proteins S5 and S12.

Its function is as follows. One of the primary rRNA binding proteins, it binds directly to 16S rRNA central domain where it helps coordinate assembly of the platform of the 30S subunit. In Streptomyces avermitilis (strain ATCC 31267 / DSM 46492 / JCM 5070 / NBRC 14893 / NCIMB 12804 / NRRL 8165 / MA-4680), this protein is Small ribosomal subunit protein uS8.